A 140-amino-acid chain; its full sequence is MTVTIYHNPACGTSRNTLAMIRNAGIEPTVVEYLKNPPSRAELEAMIAAAGLTVRQAIREKGTPFAELGLGDPSRSDEELLDAMLEHPILINRPFVVAPLGTRLCRPSEVVLDILPDTHKGPFSKEDGEAVLDAGGKRIV.

The active-site Nucleophile; cysteine thioarsenate intermediate is the cysteine 11.

Belongs to the ArsC family.

The enzyme catalyses [glutaredoxin]-dithiol + arsenate + glutathione + H(+) = glutathionyl-S-S-[glutaredoxin] + arsenite + H2O. Involved in resistance to arsenate. Catalyzes the reduction of arsenate [As(V)] to arsenite [As(III)]. The resulting arsenite is then extruded from the cell via the aquaglyceroporin AqpS. Does not display antimonate reductase activity. The chain is Arsenate reductase from Rhizobium meliloti (strain 1021) (Ensifer meliloti).